We begin with the raw amino-acid sequence, 396 residues long: 1-deoxy-D-xylulose 5-phosphate reductoisomerase (396 aa).

NADPH contacts are provided by threonine 15, glycine 16, serine 17, isoleucine 18, glycine 41, and asparagine 129. Residue lysine 130 participates in 1-deoxy-D-xylulose 5-phosphate binding. Glutamate 131 provides a ligand contact to NADPH. Residue aspartate 155 coordinates Mn(2+). 1-deoxy-D-xylulose 5-phosphate-binding residues include serine 156, glutamate 157, serine 182, and histidine 205. Glutamate 157 contacts Mn(2+). Glycine 211 contributes to the NADPH binding site. Serine 218, asparagine 223, lysine 224, and glutamate 227 together coordinate 1-deoxy-D-xylulose 5-phosphate. Glutamate 227 serves as a coordination point for Mn(2+).

It belongs to the DXR family. Requires Mg(2+) as cofactor. The cofactor is Mn(2+).

It catalyses the reaction 2-C-methyl-D-erythritol 4-phosphate + NADP(+) = 1-deoxy-D-xylulose 5-phosphate + NADPH + H(+). It participates in isoprenoid biosynthesis; isopentenyl diphosphate biosynthesis via DXP pathway; isopentenyl diphosphate from 1-deoxy-D-xylulose 5-phosphate: step 1/6. In terms of biological role, catalyzes the NADPH-dependent rearrangement and reduction of 1-deoxy-D-xylulose-5-phosphate (DXP) to 2-C-methyl-D-erythritol 4-phosphate (MEP). This Xanthomonas campestris pv. campestris (strain 8004) protein is 1-deoxy-D-xylulose 5-phosphate reductoisomerase.